Here is a 141-residue protein sequence, read N- to C-terminus: Cystatin (141 aa).

The signal sequence occupies residues 1–26 (MVHSQLPVAAPLRLLCALLLLPSATM). Residues 29–129 (GGLSPRSVTD…CHFQVWSRPW (101 aa)) form the Cystatin domain. The Secondary area of contact signature appears at 73–77 (QVVAG). Cystine bridges form between C91–C107 and C120–C140.

This sequence belongs to the cystatin family. In terms of tissue distribution, expressed at a low level by the venom gland (at protein level).

It is found in the secreted. Functionally, inhibits various C1 cysteine proteases including cathepsin L, papain and cathepsin B. This protein has no toxic activity and its function in the venom is unknown. It may play a role as a housekeeping or regulatory protein. This chain is Cystatin, found in Oxyuranus scutellatus scutellatus (Australian taipan).